The sequence spans 161 residues: Regulator of ribonuclease activity A (161 aa).

Belongs to the RraA family. In terms of assembly, homotrimer. Binds to both RNA-binding sites in the C-terminal region of Rne and to RhlB.

The protein resides in the cytoplasm. Globally modulates RNA abundance by binding to RNase E (Rne) and regulating its endonucleolytic activity. Can modulate Rne action in a substrate-dependent manner by altering the composition of the degradosome. Modulates RNA-binding and helicase activities of the degradosome. The sequence is that of Regulator of ribonuclease activity A from Shigella boydii serotype 18 (strain CDC 3083-94 / BS512).